The sequence spans 930 residues: Protocadherin gamma-B6 (930 aa).

The N-terminal stretch at 1–30 (MGGSCAQRRRAGPRQVLFPLLLPLFYPTLS) is a signal peptide. 6 consecutive Cadherin domains span residues 31–133 (EPIR…APQF), 134–242 (DKKE…PPVF), 243–347 (SRDE…SPEI), 348–452 (IITS…APVF), 453–562 (DQTS…APRV), and 570–675 (DGSA…LPDL). Residues 31–691 (EPIRYSIPEE…SDPQAELQFY (661 aa)) lie on the Extracellular side of the membrane. N-linked (GlcNAc...) asparagine glycosylation is found at Asn-304, Asn-419, and Asn-545. The helical transmembrane segment at 692–712 (LVVALALISVLFLLAVILAIA) threads the bilayer. Topologically, residues 713 to 930 (LRLRRSLSPA…KKKSGKKEKK (218 aa)) are cytoplasmic. 2 disordered regions span residues 791–839 (PHGG…WPNN) and 900–930 (ATLT…KEKK). Over residues 800–839 (HPETLTSQAPPNTDWRFSQAQRPGTSGSQNGDDTGTWPNN) the composition is skewed to polar residues. A compositionally biased stretch (basic residues) spans 920 to 930 (NKKKSGKKEKK).

The protein resides in the cell membrane. Potential calcium-dependent cell-adhesion protein. May be involved in the establishment and maintenance of specific neuronal connections in the brain. This is Protocadherin gamma-B6 (PCDHGB6) from Homo sapiens (Human).